The following is a 395-amino-acid chain: G-protein coupled receptor 182 (395 aa).

At 1–53 (MSVIPSSRPVSTLAPDNDFREIHNWTELLHLFNQTFSDCHMELNENTKQVVLF) the chain is on the extracellular side. N24 and N33 each carry an N-linked (GlcNAc...) asparagine glycan. The helical transmembrane segment at 54 to 75 (VFYLAIFVVGLVENVLVICVNC) threads the bilayer. The Cytoplasmic portion of the chain corresponds to 76-86 (RRSGRVGMLNL). Residues 87-109 (YILNMAVADLGIILSLPVWMLEV) traverse the membrane as a helical segment. Topologically, residues 110–123 (MLEYTWLWGSFSCR) are extracellular. Cysteines 122 and 198 form a disulfide. A helical transmembrane segment spans residues 124 to 145 (FIHYFYLANMYSSIFFLTCLSI). The Cytoplasmic portion of the chain corresponds to 146–166 (DRYVTLTNTSPSWQRHQHRIR). A helical membrane pass occupies residues 167-189 (RAVCAGVWVLSAIIPLPEVVHIQ). Residues 190–213 (LLDGSEPMCLFLAPFETYSAWALA) lie on the Extracellular side of the membrane. Residues 214-235 (VALSATILGFLLPFPLIAVFNI) form a helical membrane-spanning segment. The Cytoplasmic segment spans residues 236–254 (LSACRLRRQGQTESRRHCL). A helical transmembrane segment spans residues 255–276 (LMWAYIVVFVICWLPYHVTMLL). The Extracellular portion of the chain corresponds to 277–295 (LTLHTTHIFLHCNLVNFLY). The chain crosses the membrane as a helical span at residues 296 to 316 (FFYEIIDCFSMLHCVANPILY). At 317–395 (NFLSPSFRGR…RTPHLHSAIP (79 aa)) the chain is on the cytoplasmic side. S329 bears the Phosphoserine mark.

It belongs to the G-protein coupled receptor 1 family. In terms of tissue distribution, expressed in a wide variety of peripheral tissues in the adult rat with prominent expression in lung, testis, adrenal and liver.

It is found in the cell membrane. Its function is as follows. Orphan receptor. The chain is G-protein coupled receptor 182 (Gpr182) from Rattus norvegicus (Rat).